The following is an 803-amino-acid chain: Translation initiation factor IF-2 (803 aa).

The segment covering P65–T75 has biased composition (basic and acidic residues). The interval P65–K186 is disordered. The segment covering N175–L185 has biased composition (basic residues). One can recognise a tr-type G domain in the interval I300–E468. The G1 stretch occupies residues G309 to T316. Residue G309 to T316 coordinates GTP. Residues G334–H338 are G2. Positions D355–G358 are G3. Residues D355 to H359 and N409 to D412 each bind GTP. The G4 stretch occupies residues N409–D412. The G5 stretch occupies residues S445–K447.

The protein belongs to the TRAFAC class translation factor GTPase superfamily. Classic translation factor GTPase family. IF-2 subfamily.

The protein resides in the cytoplasm. Functionally, one of the essential components for the initiation of protein synthesis. Protects formylmethionyl-tRNA from spontaneous hydrolysis and promotes its binding to the 30S ribosomal subunits. Also involved in the hydrolysis of GTP during the formation of the 70S ribosomal complex. In Tropheryma whipplei (strain TW08/27) (Whipple's bacillus), this protein is Translation initiation factor IF-2.